The sequence spans 154 residues: Cyanate hydratase (154 aa).

Active-site residues include Arg100, Glu103, and Ser126.

This sequence belongs to the cyanase family.

It catalyses the reaction cyanate + hydrogencarbonate + 3 H(+) = NH4(+) + 2 CO2. Catalyzes the reaction of cyanate with bicarbonate to produce ammonia and carbon dioxide. The sequence is that of Cyanate hydratase from Aspergillus fumigatus (strain CBS 144.89 / FGSC A1163 / CEA10) (Neosartorya fumigata).